The following is a 548-amino-acid chain: MSNKVLMIDGDRISGNEVRAQNVLAVTAIANIVKTSFGPIGLDKMLIDNIGSIVVTNDGATILQKIDIEHPAAKILVQLSELQDQEVGDGTTTVVILAAELLKRANELVARKVHPTVIISGFRLACTEAIKYINETLAVKVETLPKDFIVNIAKTSMSSKTINDDSDFFSKIVIEAITRVKTIDYKGDVKYPINAINILKAHGKSAKESTLVEGYALNCTVASEGMPKRIQGAKIAFLDFNLAKTKMKLGQKVVVTNVNDLEAIRDRENDIVKERISLIIKSGANVVLTTKGIDDLCLKYFVEAGCMAVRRCKKEDLKRIAKSCGGTVLITLANLEGEESFDTTALGIADEVVQDRLADDELIIVKNSNKKSASIILRGANELMLDEMERSIHDSLCIVKRTLESGTIVPGGGAVESALSIYLDNIAATMGSRKQLAISEFAESLLVVPKQLAVNAALDASDLVSKLKAYHHAAQTDPSKKSYAYSGLDLFNNKVRNNLEAGVLEPAIAKIKCIKFATESAITILRIDDKITLNPREQQGGDHEGHGH.

This sequence belongs to the TCP-1 chaperonin family. As to quaternary structure, heterooligomeric complex of about 850 to 900 kDa that forms two stacked rings, 12 to 16 nm in diameter.

Its subcellular location is the cytoplasm. Its function is as follows. Molecular chaperone; assists the folding of proteins upon ATP hydrolysis. Known to play a role, in vitro, in the folding of actin and tubulin. The polypeptide is T-complex protein 1 subunit alpha (tcp1) (Dictyostelium discoideum (Social amoeba)).